We begin with the raw amino-acid sequence, 350 residues long: Renin receptor (350 aa).

An N-terminal signal peptide occupies residues 1–17; sequence MAVLVVLLSSLVSSALA. The Extracellular segment spans residues 18-302; it reads NEFSILRSPG…YNLAYKYNLE (285 aa). Residues 303 to 323 form a helical membrane-spanning segment; that stretch reads YSVVFNLVLWIMTGLALAVII. Over 324-350 the chain is Cytoplasmic; the sequence is TSYNIWNMDPGYDSIIYRMTNQKIRMD. Positions 346-350 match the Mediates retrograde transport to the ER motif; that stretch reads KIRMD.

In terms of assembly, interacts with renin. Accessory component of the multisubunit proton-transporting vacuolar (V)-ATPase protein pump. Interacts (via N-terminus) with ATP6AP1 (via N-terminus). Interacts with ATP6V0D1; ATP6V0D1 is a V-ATPase complex subunit and the interaction promotes V-ATPase complex assembly. Interacts with TMEM9; TMEM9 is a V-ATPase assembly regulator and the interaction induces the interaction with ATP6V0D1. Interacts with VMA21 (via N-terminus); VMA21 is a V-ATPase accessory component. Phosphorylated. In terms of processing, proteolytically cleaved by a furin-like convertase in the trans-Golgi network to generate N- and C-terminal fragments. As to expression, expressed in the brain.

Its subcellular location is the endoplasmic reticulum membrane. The protein resides in the lysosome membrane. It localises to the cytoplasmic vesicle. It is found in the autophagosome membrane. The protein localises to the cell projection. Its subcellular location is the dendritic spine membrane. The protein resides in the axon. It localises to the endosome membrane. It is found in the clathrin-coated vesicle membrane. The protein localises to the secretory vesicle. Its subcellular location is the synaptic vesicle membrane. Multifunctional protein which functions as a renin, prorenin cellular receptor and is involved in the assembly of the lysosomal proton-transporting V-type ATPase (V-ATPase) and the acidification of the endo-lysosomal system. May mediate renin-dependent cellular responses by activating ERK1 and ERK2. By increasing the catalytic efficiency of renin in AGT/angiotensinogen conversion to angiotensin I, may also play a role in the renin-angiotensin system (RAS). Through its function in V-type ATPase (v-ATPase) assembly and acidification of the lysosome it regulates protein degradation and may control different signaling pathways important for proper brain development, synapse morphology and synaptic transmission. The chain is Renin receptor (Atp6ap2) from Rattus norvegicus (Rat).